Reading from the N-terminus, the 265-residue chain is Orotidine 5'-phosphate decarboxylase (265 aa).

Residues aspartate 37, 59–61 (KTH), 91–100 (DRKFADIGNT), tyrosine 217, and arginine 235 each bind substrate. Catalysis depends on lysine 93, which acts as the Proton donor.

This sequence belongs to the OMP decarboxylase family.

The catalysed reaction is orotidine 5'-phosphate + H(+) = UMP + CO2. It functions in the pathway pyrimidine metabolism; UMP biosynthesis via de novo pathway; UMP from orotate: step 2/2. The protein is Orotidine 5'-phosphate decarboxylase (URA3) of Diutina rugosa (Yeast).